The chain runs to 162 residues: uncharacterized protein (162 aa).

The helical transmembrane segment at leucine 7–phenylalanine 27 threads the bilayer.

It localises to the membrane. This is an uncharacterized protein from Methanocaldococcus jannaschii (strain ATCC 43067 / DSM 2661 / JAL-1 / JCM 10045 / NBRC 100440) (Methanococcus jannaschii).